Reading from the N-terminus, the 1015-residue chain is Collagen alpha-2(I) chain (1015 aa).

The interval Ser1–Ala1015 is disordered. Residues Pro10 and Pro13 each carry the 4-hydroxyproline modification. Gly residues predominate over residues Lys20–Gly30. Pro38 carries the post-translational modification 4-hydroxyproline. A compositionally biased stretch (low complexity) spans Gln43 to Lys69. The span at Ala70–Glu84 shows a compositional bias: basic and acidic residues. Position 106 is a 5-hydroxylysine; alternate (Lys106). O-linked (Gal...) hydroxylysine; alternate glycosylation is present at Lys106. 3 stretches are compositionally biased toward low complexity: residues Val140–Pro169, Ala194–Pro208, and Pro235–Val250. Over residues Gly302–Gly311 the composition is skewed to gly residues. Residues Pro324–Ser340 show a composition bias toward low complexity. 4-hydroxyproline occurs at positions 346 and 349. Positions Gly441–Gly450 are enriched in gly residues. A compositionally biased stretch (low complexity) spans Pro497 to Pro514. Positions Gly534–Gly545 are enriched in gly residues. 2 stretches are compositionally biased toward low complexity: residues Val568–Ser612 and Val619–Ala639. Over residues Lys640 to Lys649 the composition is skewed to basic and acidic residues. Residues Pro657 to Asn670 show a composition bias toward low complexity. A compositionally biased stretch (gly residues) spans Gly674–Gly686. A compositionally biased stretch (low complexity) spans Leu687–Thr697. Residues Gly734–Gly743 are compositionally biased toward gly residues. Low complexity-rich tracts occupy residues Ser751 to Pro778, Leu786 to Leu799, Tyr846 to Ala868, and Pro877 to Pro897. A compositionally biased stretch (basic and acidic residues) spans Arg901–Pro912. A compositionally biased stretch (pro residues) spans Pro987–Pro997.

It belongs to the fibrillar collagen family. Trimers of one alpha 2(I) and two alpha 1(I) chains. Interacts (via C-terminus) with TMEM131 (via PapD-L domain); the interaction is direct and is involved in assembly and TRAPPIII ER-to-Golgi transport complex-dependent secretion of collagen. In terms of processing, prolines at the third position of the tripeptide repeating unit (G-X-Y) are hydroxylated in some or all of the chains. In terms of tissue distribution, expressed in bones.

The protein localises to the secreted. Its subcellular location is the extracellular space. It localises to the extracellular matrix. In terms of biological role, type I collagen is a member of group I collagen (fibrillar forming collagen). In Doedicurus sp. (South American giant glyptodont), this protein is Collagen alpha-2(I) chain.